The following is a 963-amino-acid chain: MPAPRAAAAAFLLLHLVLQPWQRTSAQATPQVFDLLPSSSQRLNPSALQPVLTDPTLHEVYLISTFKLQSKSSATIFGLYSSSDNSKYFEFTVMGRLNKAILRYLKNDGKIHLVVFNNLQLADGRRHRVLLRLSNLQRGDGSVELYLDCAQADSVRNLPRAFSGLTQNPESIELRTFQRKPQDFLEELKLVVRGSLFQVASLQDCFLQQSEPLAATSTGDFNRQFLGQMTQLNQLLGEVKDLLRQQVKETSFLRNTIAECQACGPLSFQSPTPNTLVPIAPPAPPTRPTRHCDSSPCFRGVRCTDTRDGFQCGPCPDGYTGNGITCSDVDECKYHPCYPGVRCVNLAPGFRCDACPVGFTGPMVQGVGINFAKTNKQVCTDVDECQNGACVLNSICINTLGSYRCGPCKPGYTGDQTRGCKTERSCRNPEQNPCSVHAQCIEERQGDVTCVCGVGWAGDGYVCGKDVDIDSYPDEELPCSARNCKKDNCKYVPNSGQEDADRDGIGDACDEDADGDGILNEQDNCVLTHNIDQRNSDKDIFGDACDNCRMVLNNDQKDTDGDGRGDACDDDMDGDGIKNILDNCPRVPNRDQQDRDGDDVGDACDSCPDVSNPNQSDVDNDLVGDSCDTNQDSDGDGHQDSTDNCPTVINSSQLDTDKDGIGDECDDDDDNDGIPDLVPPGPDNCRLVPNPAQEDSNNDGVGDICEADFDQDQVIDHIDVCPENAEITLTDFRAYQTVVLDPEGDAQIDPNWVVLNQGMEIVQTMNSDPGLAVGYTAFNGVDFEGTFHVNTQTDDDYAGFIFGYQDSSSFYVVMWKQTEQTYWQATPFRAVAEPGIQLKAVKSKTGPGEHLRNSLWHTGDTSDQVRLLWKDSRNVGWKDKVSYRWFLQHRPQVGYIRVRFYEGSELVADSGVTIDTTMRGGRLGVFCFSQENIIWSNLKYRCNDTIPEDFQEFQTQSFDRLDN.

The N-terminal stretch at 1–26 is a signal peptide; that stretch reads MPAPRAAAAAFLLLHLVLQPWQRTSA. The Laminin G-like domain occupies 29–194; sequence TPQVFDLLPS…LEELKLVVRG (166 aa). The short motif at 138 to 140 is the Cell attachment site element; that stretch reads RGD. The region spanning 288–327 is the EGF-like 1 domain; the sequence is PTRHCDSSPCFRGVRCTDTRDGFQCGPCPDGYTGNGITCS. 21 disulfide bridges follow: cysteine 292/cysteine 303, cysteine 297/cysteine 312, cysteine 315/cysteine 326, cysteine 332/cysteine 343, cysteine 337/cysteine 352, cysteine 355/cysteine 379, cysteine 385/cysteine 396, cysteine 390/cysteine 405, cysteine 408/cysteine 420, cysteine 426/cysteine 440, cysteine 434/cysteine 450, cysteine 452/cysteine 463, cysteine 479/cysteine 484, cysteine 489/cysteine 509, cysteine 525/cysteine 545, cysteine 548/cysteine 568, cysteine 584/cysteine 604, cysteine 607/cysteine 627, cysteine 645/cysteine 665, cysteine 685/cysteine 705, and cysteine 721/cysteine 942. An EGF-like 2; calcium-binding domain is found at 328-365; the sequence is DVDECKYHPCYPGVRCVNLAPGFRCDACPVGFTGPMVQ. One can recognise an EGF-like 3; calcium-binding domain in the interval 381–418; it reads DVDECQNGACVLNSICINTLGSYRCGPCKPGYTGDQTR. The region spanning 422–464 is the EGF-like 4 domain; the sequence is TERSCRNPEQNPCSVHAQCIEERQGDVTCVCGVGWAGDGYVCG. TSP type-3 repeat units lie at residues 465-497, 498-533, 534-556, 557-592, 593-615, 616-653, 654-693, and 694-729; these read KDVDIDSYPDEELPCSARNCKKDNCKYVPNSGQ, EDADRDGIGDACDEDADGDGILNEQDNCVLTHNIDQ, RNSDKDIFGDACDNCRMVLNNDQ, KDTDGDGRGDACDDDMDGDGIKNILDNCPRVPNRDQ, QDRDGDDVGDACDSCPDVSNPNQ, SDVDNDLVGDSCDTNQDSDGDGHQDSTDNCPTVINSSQ, LDTDKDGIGDECDDDDDNDGIPDLVPPGPDNCRLVPNPAQ, and EDSNNDGVGDICEADFDQDQVIDHIDVCPENAEITL. The Cell attachment site signature appears at 564–566; sequence RGD. The interval 579–676 is disordered; it reads NILDNCPRVP…DDDDNDGIPD (98 aa). Residues asparagine 614 and asparagine 650 are each glycosylated (N-linked (GlcNAc...) asparagine). The span at 642 to 654 shows a compositional bias: polar residues; it reads TDNCPTVINSSQL. Positions 662–673 are enriched in acidic residues; the sequence is GDECDDDDDNDG. The region spanning 733 to 947 is the TSP C-terminal domain; sequence RAYQTVVLDP…LKYRCNDTIP (215 aa). N-linked (GlcNAc...) asparagine glycosylation is present at asparagine 943.

This sequence belongs to the thrombospondin family. As to quaternary structure, homopentamer; disulfide-linked. Interacts with PTBP3. Interacts (via EGF-like 3; calcium-binding domain) with ATF6 and facilitates its processing, activation and nuclear translocation. Interacts with NOTCH1. Heart. Up-regulated in the heart in response to ischemic injury and pathology (at protein level). Astrocytes; expressed at high levels in subventricular zone (SVZ)-derived astrocytes and at low levels in cortical astrocytes. In response to peripheral nerve injury, significantly up-regulated in the dorsal spinal cord (at protein level).

The protein localises to the endoplasmic reticulum. It localises to the sarcoplasmic reticulum. It is found in the secreted. Its subcellular location is the extracellular space. The protein resides in the extracellular matrix. In terms of biological role, adhesive glycoprotein that mediates cell-to-cell and cell-to-matrix interactions and is involved in various processes including cellular proliferation, migration, adhesion and attachment, inflammatory response to CNS injury, regulation of vascular inflammation and adaptive responses of the heart to pressure overload and in myocardial function and remodeling. Binds to structural extracellular matrix (ECM) proteins and modulates the ECM in response to tissue damage, contributing to cardioprotective and adaptive ECM remodeling. Plays a role in ER stress response, via its interaction with the activating transcription factor 6 alpha (ATF6) which produces adaptive ER stress response factors and protects myocardium from pressure overload. May contribute to spinal presynaptic hypersensitivity and neuropathic pain states after peripheral nerve injury. May play a role in regulating protective astrogenesis from the subventricular zone (SVZ) niche after injury in a NOTCH1-dependent manner. The sequence is that of Thrombospondin-4 (Thbs4) from Mus musculus (Mouse).